The primary structure comprises 154 residues: MSLIPGFFGGRRSNVFDPFSLDMWDPFKDFHVPTSSVSAENSAFVSTRVDWKETPEAHVFKADIPGLKKEEVKVQIEDDRVLQISGERNVEKEDKNDTWHRVERSSGKFTRRFRLPENAKVNEVKASMENGVLTVTVPKEEVKKPDVKAIEISG.

Residues 40–154 (ENSAFVSTRV…PDVKAIEISG (115 aa)) form the sHSP domain.

It belongs to the small heat shock protein (HSP20) family. Forms oligomeric structures.

It is found in the cytoplasm. The chain is 17.5 kDa class I heat shock protein (HSP17.5-E) from Glycine max (Soybean).